The chain runs to 343 residues: Aspartate carbamoyltransferase catalytic subunit (343 aa).

Residues Arg-91 and Thr-92 each contribute to the carbamoyl phosphate site. Lys-119 serves as a coordination point for L-aspartate. The carbamoyl phosphate site is built by Arg-141, His-171, and Gln-174. L-aspartate is bound by residues Arg-204 and Arg-259. Residues Gly-300 and Pro-301 each coordinate carbamoyl phosphate.

This sequence belongs to the aspartate/ornithine carbamoyltransferase superfamily. ATCase family. In terms of assembly, heterododecamer (2C3:3R2) of six catalytic PyrB chains organized as two trimers (C3), and six regulatory PyrI chains organized as three dimers (R2).

It catalyses the reaction carbamoyl phosphate + L-aspartate = N-carbamoyl-L-aspartate + phosphate + H(+). The protein operates within pyrimidine metabolism; UMP biosynthesis via de novo pathway; (S)-dihydroorotate from bicarbonate: step 2/3. In terms of biological role, catalyzes the condensation of carbamoyl phosphate and aspartate to form carbamoyl aspartate and inorganic phosphate, the committed step in the de novo pyrimidine nucleotide biosynthesis pathway. The sequence is that of Aspartate carbamoyltransferase catalytic subunit from Burkholderia vietnamiensis (strain G4 / LMG 22486) (Burkholderia cepacia (strain R1808)).